Consider the following 171-residue polypeptide: 6,7-dimethyl-8-ribityllumazine synthase (171 aa).

5-amino-6-(D-ribitylamino)uracil is bound by residues Phe-24, 58–60 (ALE), and 82–84 (AVI). Residue 87-88 (ET) participates in (2S)-2-hydroxy-3-oxobutyl phosphate binding. His-90 (proton donor) is an active-site residue. Asn-115 contributes to the 5-amino-6-(D-ribitylamino)uracil binding site. Arg-129 is a (2S)-2-hydroxy-3-oxobutyl phosphate binding site. The segment at 150-171 (ALDQLGDDEDEEEDEEDEEERA) is disordered. The span at 154–171 (LGDDEDEEEDEEDEEERA) shows a compositional bias: acidic residues.

The protein belongs to the DMRL synthase family.

It catalyses the reaction (2S)-2-hydroxy-3-oxobutyl phosphate + 5-amino-6-(D-ribitylamino)uracil = 6,7-dimethyl-8-(1-D-ribityl)lumazine + phosphate + 2 H2O + H(+). It participates in cofactor biosynthesis; riboflavin biosynthesis; riboflavin from 2-hydroxy-3-oxobutyl phosphate and 5-amino-6-(D-ribitylamino)uracil: step 1/2. Catalyzes the formation of 6,7-dimethyl-8-ribityllumazine by condensation of 5-amino-6-(D-ribitylamino)uracil with 3,4-dihydroxy-2-butanone 4-phosphate. This is the penultimate step in the biosynthesis of riboflavin. The chain is 6,7-dimethyl-8-ribityllumazine synthase from Burkholderia ambifaria (strain MC40-6).